Here is a 320-residue protein sequence, read N- to C-terminus: Cytochrome f (320 aa).

The signal sequence occupies residues 1–35 (MQNRKTFSWVKEQMTRSIYVSIMIYVITRASISNA). 4 residues coordinate heme: Tyr-36, Cys-56, Cys-59, and His-60. Residues 286–306 (VQGLLFFLASVILAQIFLVLK) form a helical membrane-spanning segment.

The protein belongs to the cytochrome f family. In terms of assembly, the 4 large subunits of the cytochrome b6-f complex are cytochrome b6, subunit IV (17 kDa polypeptide, petD), cytochrome f and the Rieske protein, while the 4 small subunits are PetG, PetL, PetM and PetN. The complex functions as a dimer. It depends on heme as a cofactor.

Its subcellular location is the plastid. It localises to the chloroplast thylakoid membrane. In terms of biological role, component of the cytochrome b6-f complex, which mediates electron transfer between photosystem II (PSII) and photosystem I (PSI), cyclic electron flow around PSI, and state transitions. The sequence is that of Cytochrome f from Phalaenopsis aphrodite subsp. formosana (Moth orchid).